We begin with the raw amino-acid sequence, 460 residues long: Methylenetetrahydrofolate--tRNA-(uracil-5-)-methyltransferase TrmFO (460 aa).

15 to 20 (GAGLAG) serves as a coordination point for FAD.

Belongs to the MnmG family. TrmFO subfamily. Requires FAD as cofactor.

It is found in the cytoplasm. It carries out the reaction uridine(54) in tRNA + (6R)-5,10-methylene-5,6,7,8-tetrahydrofolate + NADH + H(+) = 5-methyluridine(54) in tRNA + (6S)-5,6,7,8-tetrahydrofolate + NAD(+). The enzyme catalyses uridine(54) in tRNA + (6R)-5,10-methylene-5,6,7,8-tetrahydrofolate + NADPH + H(+) = 5-methyluridine(54) in tRNA + (6S)-5,6,7,8-tetrahydrofolate + NADP(+). Functionally, catalyzes the folate-dependent formation of 5-methyl-uridine at position 54 (M-5-U54) in all tRNAs. This Synechococcus sp. (strain CC9902) protein is Methylenetetrahydrofolate--tRNA-(uracil-5-)-methyltransferase TrmFO.